The chain runs to 204 residues: MSIKYVATSKLPTPWGVFAMHGFEDTESGKEHVALTFGTLSADEPVLGRIHSECLTGDALFSLRCDCGFQLQAAMQNIAETGSGFILYLRQEGRGIGLLNKIRAYELQDKGANTVEANEQLGFEADMRKYDMIKPILEQIGVKHVRLMTNNPRKVKAMKEFGIEVVERVPLQVGKNRYNEAYLKTKSTELGHMMSEYHFMDENK.

Position 49-53 (Arg-49–Glu-53) interacts with GTP. Zn(2+)-binding residues include Cys-54, Cys-65, and Cys-67. GTP-binding positions include Gln-70, Glu-92–Arg-94, and Thr-114. The active-site Proton acceptor is Asp-126. Arg-128 functions as the Nucleophile in the catalytic mechanism. Thr-149 and Lys-154 together coordinate GTP.

It belongs to the GTP cyclohydrolase II family. Zn(2+) is required as a cofactor.

It carries out the reaction GTP + 4 H2O = 2,5-diamino-6-hydroxy-4-(5-phosphoribosylamino)-pyrimidine + formate + 2 phosphate + 3 H(+). It participates in cofactor biosynthesis; riboflavin biosynthesis; 5-amino-6-(D-ribitylamino)uracil from GTP: step 1/4. In terms of biological role, catalyzes the conversion of GTP to 2,5-diamino-6-ribosylamino-4(3H)-pyrimidinone 5'-phosphate (DARP), formate and pyrophosphate. This Shewanella baltica (strain OS155 / ATCC BAA-1091) protein is GTP cyclohydrolase-2.